The sequence spans 413 residues: uncharacterized protein (413 aa).

A signal peptide spans 1–20; sequence MRVIIVIMMVVFVVVGTSSG.

This is an uncharacterized protein from Archaeoglobus fulgidus (strain ATCC 49558 / DSM 4304 / JCM 9628 / NBRC 100126 / VC-16).